Reading from the N-terminus, the 205-residue chain is Inactive ribonuclease-like protein 9 (205 aa).

The N-terminal stretch at 1 to 24 (MMLITTHSLPLLLLLLQLWQPLQF) is a signal peptide. Cystine bridges form between C97–C152, C115–C167, and C122–C129. N130 and N142 each carry an N-linked (GlcNAc...) asparagine glycan.

Belongs to the pancreatic ribonuclease family.

Its subcellular location is the secreted. Its function is as follows. Does not exhibit any ribonuclease activity. This Cebus albifrons (White-fronted capuchin) protein is Inactive ribonuclease-like protein 9 (RNASE9).